The chain runs to 814 residues: Valine--tRNA ligase (814 aa).

The 'HIGH' region motif lies at 46–56; the sequence is PTVSGQLHIGH. Positions 536 to 540 match the 'KMSKS' region motif; the sequence is KMSKS. Lys539 contributes to the ATP binding site.

Belongs to the class-I aminoacyl-tRNA synthetase family. ValS type 2 subfamily. As to quaternary structure, monomer.

Its subcellular location is the cytoplasm. It catalyses the reaction tRNA(Val) + L-valine + ATP = L-valyl-tRNA(Val) + AMP + diphosphate. In terms of biological role, catalyzes the attachment of valine to tRNA(Val). As ValRS can inadvertently accommodate and process structurally similar amino acids such as threonine, to avoid such errors, it has a 'posttransfer' editing activity that hydrolyzes mischarged Thr-tRNA(Val) in a tRNA-dependent manner. This chain is Valine--tRNA ligase, found in Rickettsia typhi (strain ATCC VR-144 / Wilmington).